We begin with the raw amino-acid sequence, 491 residues long: Aspartyl/glutamyl-tRNA(Asn/Gln) amidotransferase subunit B (491 aa).

This sequence belongs to the GatB/GatE family. GatB subfamily. In terms of assembly, heterotrimer of A, B and C subunits.

The catalysed reaction is L-glutamyl-tRNA(Gln) + L-glutamine + ATP + H2O = L-glutaminyl-tRNA(Gln) + L-glutamate + ADP + phosphate + H(+). It catalyses the reaction L-aspartyl-tRNA(Asn) + L-glutamine + ATP + H2O = L-asparaginyl-tRNA(Asn) + L-glutamate + ADP + phosphate + 2 H(+). Functionally, allows the formation of correctly charged Asn-tRNA(Asn) or Gln-tRNA(Gln) through the transamidation of misacylated Asp-tRNA(Asn) or Glu-tRNA(Gln) in organisms which lack either or both of asparaginyl-tRNA or glutaminyl-tRNA synthetases. The reaction takes place in the presence of glutamine and ATP through an activated phospho-Asp-tRNA(Asn) or phospho-Glu-tRNA(Gln). The chain is Aspartyl/glutamyl-tRNA(Asn/Gln) amidotransferase subunit B from Burkholderia lata (strain ATCC 17760 / DSM 23089 / LMG 22485 / NCIMB 9086 / R18194 / 383).